The following is a 361-amino-acid chain: MYGKGKSNSSAVPSDSQAREKLALYVYEYLLHVGAQKSAQTFLSEIRWEKNITLGEPPGFLHSWWCVFWDLYCAAPERRETCEHSSEAKAFHDYSAAAAPSPVLGNIPPGDGMPVGPVPPGFFQPFMSPRYPGGPRPPLRIPNQALGGVPGSQPLLPSGMDPTRQQGHPNMGGPMQRMTPPRGMVPLGPQNYGGAMRPPLNALGGPGMPGMNMGPGGGRPWPNPTNANSIPYSSASPGNYVGPPGGGGPPGTPIMPSPADSTNSGDNMYTLMNAVPPGPNRPNFPMGPGSDGPMGGLGGMESHHMNGSLGSGDMDSISKNSPNNMSLSNQPGTPRDDGEMGGNFLNPFQSESYSPSMTMSV.

Lysine 6 is modified (N6-acetyllysine). The LisH domain occupies 18-50; sequence AREKLALYVYEYLLHVGAQKSAQTFLSEIRWEK. 2 disordered regions span residues 147-171 and 194-361; these read GGVPGSQPLLPSGMDPTRQQGHPNM and GAMR…TMSV. Residues 204 to 219 are compositionally biased toward gly residues; it reads GGPGMPGMNMGPGGGR. Residues 225 to 236 are compositionally biased toward polar residues; it reads TNANSIPYSSAS. Residues 246–256 are compositionally biased toward pro residues; it reads GGGPPGTPIMP. The segment covering 289 to 299 has biased composition (gly residues); sequence GSDGPMGGLGG. Positions 317–332 are enriched in polar residues; it reads ISKNSPNNMSLSNQPG. Residue serine 321 is modified to Phosphoserine. The residue at position 333 (threonine 333) is a Phosphothreonine. Polar residues predominate over residues 346–361; the sequence is NPFQSESYSPSMTMSV.

In terms of tissue distribution, ubiquitous.

The protein resides in the nucleus. In Homo sapiens (Human), this protein is Single-stranded DNA-binding protein 2 (SSBP2).